Reading from the N-terminus, the 578-residue chain is Proline--tRNA ligase (578 aa).

This sequence belongs to the class-II aminoacyl-tRNA synthetase family. ProS type 1 subfamily. In terms of assembly, homodimer.

Its subcellular location is the cytoplasm. It catalyses the reaction tRNA(Pro) + L-proline + ATP = L-prolyl-tRNA(Pro) + AMP + diphosphate. Catalyzes the attachment of proline to tRNA(Pro) in a two-step reaction: proline is first activated by ATP to form Pro-AMP and then transferred to the acceptor end of tRNA(Pro). As ProRS can inadvertently accommodate and process non-cognate amino acids such as alanine and cysteine, to avoid such errors it has two additional distinct editing activities against alanine. One activity is designated as 'pretransfer' editing and involves the tRNA(Pro)-independent hydrolysis of activated Ala-AMP. The other activity is designated 'posttransfer' editing and involves deacylation of mischarged Ala-tRNA(Pro). The misacylated Cys-tRNA(Pro) is not edited by ProRS. The chain is Proline--tRNA ligase from Paraburkholderia xenovorans (strain LB400).